Here is a 72-residue protein sequence, read N- to C-terminus: Translation initiation factor IF-1 (72 aa).

Positions 1-72 constitute an S1-like domain; the sequence is MAKEDVIEIE…TRGRITYRFK (72 aa).

This sequence belongs to the IF-1 family. Component of the 30S ribosomal translation pre-initiation complex which assembles on the 30S ribosome in the order IF-2 and IF-3, IF-1 and N-formylmethionyl-tRNA(fMet); mRNA recruitment can occur at any time during PIC assembly.

It localises to the cytoplasm. Functionally, one of the essential components for the initiation of protein synthesis. Stabilizes the binding of IF-2 and IF-3 on the 30S subunit to which N-formylmethionyl-tRNA(fMet) subsequently binds. Helps modulate mRNA selection, yielding the 30S pre-initiation complex (PIC). Upon addition of the 50S ribosomal subunit IF-1, IF-2 and IF-3 are released leaving the mature 70S translation initiation complex. This chain is Translation initiation factor IF-1, found in Streptococcus suis (strain 05ZYH33).